The primary structure comprises 140 residues: Sex-regulated protein janus-B (140 aa).

Residue arginine 42 coordinates substrate. Histidine 69 serves as the catalytic Proton acceptor. Position 110-112 (110-112 (SRT)) interacts with substrate.

The protein belongs to the janus family.

Its function is as follows. JanA and janB regulate somatic sex differentiation. The chain is Sex-regulated protein janus-B (janB) from Drosophila orena (Fruit fly).